We begin with the raw amino-acid sequence, 102 residues long: CRISPR-associated endoribonuclease Cas2 1 (102 aa).

Asp-17 serves as a coordination point for Mg(2+).

This sequence belongs to the CRISPR-associated endoribonuclease Cas2 protein family. In terms of assembly, homodimer, forms a heterotetramer with a Cas1 homodimer. It depends on Mg(2+) as a cofactor.

CRISPR (clustered regularly interspaced short palindromic repeat), is an adaptive immune system that provides protection against mobile genetic elements (viruses, transposable elements and conjugative plasmids). CRISPR clusters contain sequences complementary to antecedent mobile elements and target invading nucleic acids. CRISPR clusters are transcribed and processed into CRISPR RNA (crRNA). Functions as a ssRNA-specific endoribonuclease. Involved in the integration of spacer DNA into the CRISPR cassette. The polypeptide is CRISPR-associated endoribonuclease Cas2 1 (Rhodospirillum rubrum (strain ATCC 11170 / ATH 1.1.1 / DSM 467 / LMG 4362 / NCIMB 8255 / S1)).